The primary structure comprises 390 residues: Magnesium-protoporphyrin IX monomethyl ester [oxidative] cyclase (390 aa).

Residues 1–20 are disordered; it reads MSQSTIESTNKKEINKGKAP.

It belongs to the AcsF family. Requires Fe cation as cofactor.

It catalyses the reaction Mg-protoporphyrin IX 13-monomethyl ester + 3 NADPH + 3 O2 + 2 H(+) = 3,8-divinyl protochlorophyllide a + 3 NADP(+) + 5 H2O. It participates in porphyrin-containing compound metabolism; chlorophyll biosynthesis (light-independent). Functionally, catalyzes the formation of the isocyclic ring in chlorophyll biosynthesis. Mediates the cyclase reaction, which results in the formation of divinylprotochlorophyllide (Pchlide) characteristic of all chlorophylls from magnesium-protoporphyrin IX 13-monomethyl ester (MgPMME). In Prochlorococcus marinus (strain MIT 9301), this protein is Magnesium-protoporphyrin IX monomethyl ester [oxidative] cyclase.